An 88-amino-acid chain; its full sequence is MISKARKQEIILKFGKNPKNTGNTSVQIALLTEDIERLKLHFLKNKKDKHSMRGFIAKVNKRKKLLNYLRINSFDTYKETIEALNIRK.

Belongs to the universal ribosomal protein uS15 family. In terms of assembly, part of the 30S ribosomal subunit. Forms a bridge to the 50S subunit in the 70S ribosome, contacting the 23S rRNA.

One of the primary rRNA binding proteins, it binds directly to 16S rRNA where it helps nucleate assembly of the platform of the 30S subunit by binding and bridging several RNA helices of the 16S rRNA. In terms of biological role, forms an intersubunit bridge (bridge B4) with the 23S rRNA of the 50S subunit in the ribosome. The chain is Small ribosomal subunit protein uS15 from Mesomycoplasma hyopneumoniae (strain 232) (Mycoplasma hyopneumoniae).